We begin with the raw amino-acid sequence, 438 residues long: UDP-N-acetylmuramoylalanine--D-glutamate ligase (438 aa).

112–118 (GSNGKST) serves as a coordination point for ATP.

It belongs to the MurCDEF family.

It localises to the cytoplasm. The enzyme catalyses UDP-N-acetyl-alpha-D-muramoyl-L-alanine + D-glutamate + ATP = UDP-N-acetyl-alpha-D-muramoyl-L-alanyl-D-glutamate + ADP + phosphate + H(+). The protein operates within cell wall biogenesis; peptidoglycan biosynthesis. Its function is as follows. Cell wall formation. Catalyzes the addition of glutamate to the nucleotide precursor UDP-N-acetylmuramoyl-L-alanine (UMA). The protein is UDP-N-acetylmuramoylalanine--D-glutamate ligase of Salmonella typhimurium (strain LT2 / SGSC1412 / ATCC 700720).